The chain runs to 728 residues: MARAKKVDKIKELMWKPKFIRNIGIVAHIDHGKTTLSDNLLAGAGMISEELAGQQLYLDFDEQEQERGITINAANVSMVHEYEGQDYLINLIDTPGHVDFGGDVTRAMRAVDGVIVVVDAVEGVMPQTETVLRQALKENVKPVLFVNKVDRLIKELELTPQQMQERLIKVITEVNKLIKAMRPDKYSEWKIDVANGSAAFGSALYNWAVSVPSQKKTGIGFKEVYEHIKEGKVKELAKKSPLYQVVLDMVIRHLPSPIEAQKERIAVIWKGDINSEVGKAMVNCDPKGPVALMITKIVVEPQAGEIAVGRLYSGTIRPGMELYIVDRKAKNRIQTVGLYMGPRRVEVDEIPAGNIVAVIGLKDAVAGSTCTTVENLTPFESIKHYSEPVVTMAIEAKNPRDLPKLIEVLRKLAKEDPTLHITLNEETGEHLISGMGELHLEVKVEKIRRDYKLDVITSPPIVVFRETVTGTSPVVEGKSPNKHNRFYIVVEPLPEKVIQMFKEGVVDMKMDKKERRRLLQEAGLTSEEAAGAEEYYEGNLFCDVTKGIQYLNETMELILEGFREAMRAGPIAREPCMGIKVKLVDCKLHEDAVHRGPAQVIPAVRSAIFAAILQAKPALLEPYQKIFITVPQDMMGAVTREIQGRRGQILEMKTEGDMVTIIAKAPVKEMFGFAGAIRGATSGKAIWSTEHAGFELVPQNLFQEFVMEVRKRKGLKLEMPKPEDFVGL.

A tr-type G domain is found at 18 to 258 (KFIRNIGIVA…MVIRHLPSPI (241 aa)). GTP-binding positions include 27–34 (AHIDHGKT), 93–97 (DTPGH), and 147–150 (NKVD). Histidine 594 carries the diphthamide modification.

The protein belongs to the TRAFAC class translation factor GTPase superfamily. Classic translation factor GTPase family. EF-G/EF-2 subfamily.

It is found in the cytoplasm. Its function is as follows. Catalyzes the GTP-dependent ribosomal translocation step during translation elongation. During this step, the ribosome changes from the pre-translocational (PRE) to the post-translocational (POST) state as the newly formed A-site-bound peptidyl-tRNA and P-site-bound deacylated tRNA move to the P and E sites, respectively. Catalyzes the coordinated movement of the two tRNA molecules, the mRNA and conformational changes in the ribosome. In Archaeoglobus fulgidus (strain ATCC 49558 / DSM 4304 / JCM 9628 / NBRC 100126 / VC-16), this protein is Elongation factor 2 (fusA).